A 163-amino-acid chain; its full sequence is Nucleotide-binding protein BSU11020 (163 aa).

Belongs to the YajQ family.

Nucleotide-binding protein. The protein is Nucleotide-binding protein BSU11020 (yitK) of Bacillus subtilis (strain 168).